Consider the following 444-residue polypeptide: Shufflon protein B' (444 aa).

Positions 1-361 (MKKYDRGWAS…TGAILSCQSG (361 aa)) are constant region. The interval 362–444 (TWRKVGSGEL…GSITVYAICQ (83 aa)) is variable region.

This chain is Shufflon protein B', found in Escherichia coli.